A 151-amino-acid chain; its full sequence is UPF0178 protein YaiI (151 aa).

This sequence belongs to the UPF0178 family.

In Salmonella enteritidis PT4 (strain P125109), this protein is UPF0178 protein YaiI.